The sequence spans 357 residues: Probable dual-specificity RNA methyltransferase RlmN (357 aa).

The Proton acceptor role is filled by Glu-95. The region spanning 105–343 is the Radical SAM core domain; sequence KKSSYTLCLS…VSIREERGSD (239 aa). Cys-112 and Cys-348 are disulfide-bonded. Cys-119, Cys-123, and Cys-126 together coordinate [4Fe-4S] cluster. S-adenosyl-L-methionine is bound by residues 174–175, Ser-206, 229–231, and Asn-305; these read GE and SLH. Residue Cys-348 is the S-methylcysteine intermediate of the active site.

The protein belongs to the radical SAM superfamily. RlmN family. The cofactor is [4Fe-4S] cluster.

The protein localises to the cytoplasm. It catalyses the reaction adenosine(2503) in 23S rRNA + 2 reduced [2Fe-2S]-[ferredoxin] + 2 S-adenosyl-L-methionine = 2-methyladenosine(2503) in 23S rRNA + 5'-deoxyadenosine + L-methionine + 2 oxidized [2Fe-2S]-[ferredoxin] + S-adenosyl-L-homocysteine. It carries out the reaction adenosine(37) in tRNA + 2 reduced [2Fe-2S]-[ferredoxin] + 2 S-adenosyl-L-methionine = 2-methyladenosine(37) in tRNA + 5'-deoxyadenosine + L-methionine + 2 oxidized [2Fe-2S]-[ferredoxin] + S-adenosyl-L-homocysteine. Functionally, specifically methylates position 2 of adenine 2503 in 23S rRNA and position 2 of adenine 37 in tRNAs. This chain is Probable dual-specificity RNA methyltransferase RlmN, found in Syntrophomonas wolfei subsp. wolfei (strain DSM 2245B / Goettingen).